The following is a 630-amino-acid chain: Amino acid transporter heavy chain SLC3A2 (630 aa).

At M1 the chain carries N-acetylmethionine. E2 carries the N-acetylserine modification. E2 carries the phosphoserine modification. The interval 15-39 (IPRQLPGSHSEAGVQGLSAGDDSEL) is disordered. The Cytoplasmic portion of the chain corresponds to 102–184 (MSQDTEVDMK…SPGWVRTRWA (83 aa)). Residue S103 is modified to Phosphoserine. Phosphothreonine is present on T106. Position 134 is a phosphoserine (S134). K147 is covalently cross-linked (Glycyl lysine isopeptide (Lys-Gly) (interchain with G-Cter in ubiquitin)). S165 is subject to Phosphoserine. K166 is covalently cross-linked (Glycyl lysine isopeptide (Lys-Gly) (interchain with G-Cter in SUMO2)). A helical; Signal-anchor for type II membrane protein transmembrane segment spans residues 185 to 205 (LLLLFWLGWLGMLAGAVVIIV). The Extracellular segment spans residues 206-630 (RAPRCRELPA…GLLLRFPYAA (425 aa)). N-linked (GlcNAc...) asparagine glycans are attached at residues N365 and N381. Phosphoserine is present on residues S406, S408, and S410. N424 is a glycosylation site (N-linked (GlcNAc...) (complex) asparagine). N506 is a glycosylation site (N-linked (GlcNAc...) asparagine). Phosphoserine is present on residues S527 and S531.

Disulfide-linked heterodimer with a non-glycosylated catalytic light subunit (SLC7A5, SLC7A6, SLC7A7, SLC7A8, SLC7A10 or SLC7A11). Interacts with TLCD3A/CT120. Interacts with ICAM1. Constitutively and specifically associates with beta-1 integrins (alpha-2/beta-1, alpha-3/beta-1, alpha-5/beta-1 and alpha-6/beta-1), but minimally with alpha-4/beta-1. Interacts with LAPTM4B; recruits SLC3A2 and SLC7A5/LAT1 to lysosomes to promote leucine uptake into these organelles and is required for mTORC1 activation. In terms of assembly, (Microbial infection) Interacts with hepatitis C virus/HCV envelope glycoprotein E2; the interaction may facilitate viral entry into host cell. N-glycosylated; N-glycosylation is crucial for trafficking and stability of SLC3A2 to the plasma membrane. In terms of processing, phosphorylation on Ser-406; Ser-408 or Ser-410 and on Ser-527 or Ser-531 by ecto-protein kinases favors heterotypic cell-cell interactions. As to expression, expressed ubiquitously in all tissues tested with highest levels detected in kidney, placenta and testis and weakest level in thymus. During gestation, expression in the placenta was significantly stronger at full-term than at the mid-trimester stage. Expressed in HUVECS and at low levels in resting peripheral blood T-lymphocytes and quiescent fibroblasts. Also expressed in fetal liver and in the astrocytic process of primary astrocytic gliomas. Expressed in retinal endothelial cells and in the intestinal epithelial cell line C2BBe1.

It localises to the apical cell membrane. The protein resides in the cell membrane. Its subcellular location is the cell junction. The protein localises to the lysosome membrane. It is found in the melanosome. It localises to the basolateral cell membrane. In terms of biological role, acts as a chaperone that facilitates biogenesis and trafficking of functional transporters heterodimers to the plasma membrane. Forms heterodimer with SLC7 family transporters (SLC7A5, SLC7A6, SLC7A7, SLC7A8, SLC7A10 and SLC7A11), a group of amino-acid antiporters. Heterodimers function as amino acids exchangers, the specificity of the substrate depending on the SLC7A subunit. Heterodimers SLC3A2/SLC7A6 or SLC3A2/SLC7A7 mediate the uptake of dibasic amino acids. Heterodimer SLC3A2/SLC7A11 functions as an antiporter by mediating the exchange of extracellular anionic L-cystine and intracellular L-glutamate across the cellular plasma membrane. SLC3A2/SLC7A10 translocates small neutral L- and D-amino acids across the plasma membrane. SLC3A2/SLC75 or SLC3A2/SLC7A8 translocates neutral amino acids with broad specificity, thyroid hormones and L-DOPA. SLC3A2 is essential for plasma membrane localization, stability, and the transport activity of SLC7A5 and SLC7A8. When associated with LAPTM4B, the heterodimer SLC7A5 is recruited to lysosomes to promote leucine uptake into these organelles, and thereby mediates mTORC1 activation. Modulates integrin-related signaling and is essential for integrin-dependent cell spreading, migration and tumor progression. Its function is as follows. (Microbial infection) In case of hepatitis C virus/HCV infection, the complex formed by SLC3A2 and SLC7A5/LAT1 plays a role in HCV propagation by facilitating viral entry into host cell and increasing L-leucine uptake-mediated mTORC1 signaling activation, thereby contributing to HCV-mediated pathogenesis. (Microbial infection) Acts as a receptor for malaria parasite Plasmodium vivax (Thai isolate) in immature red blood cells. This Homo sapiens (Human) protein is Amino acid transporter heavy chain SLC3A2.